We begin with the raw amino-acid sequence, 874 residues long: Alanine--tRNA ligase (874 aa).

Zn(2+)-binding residues include His564, His568, Cys665, and His669.

This sequence belongs to the class-II aminoacyl-tRNA synthetase family. The cofactor is Zn(2+).

The protein localises to the cytoplasm. It catalyses the reaction tRNA(Ala) + L-alanine + ATP = L-alanyl-tRNA(Ala) + AMP + diphosphate. Catalyzes the attachment of alanine to tRNA(Ala) in a two-step reaction: alanine is first activated by ATP to form Ala-AMP and then transferred to the acceptor end of tRNA(Ala). Also edits incorrectly charged Ser-tRNA(Ala) and Gly-tRNA(Ala) via its editing domain. This chain is Alanine--tRNA ligase, found in Burkholderia pseudomallei (strain 1106a).